Reading from the N-terminus, the 913-residue chain is Cadherin-4 (913 aa).

A signal peptide spans 1-19; it reads MRTGSRLLLVLLVWGSAAA. Positions 20–166 are excised as a propeptide; it reads LNGDLTVRPT…SAKGLRRQKR (147 aa). 5 Cadherin domains span residues 167-274, 275-389, 390-504, 505-610, and 611-721; these read DWVI…RPEF, INQV…PPEF, TTST…APYF, PTNH…DNAP, and ELLP…TIGA. The Extracellular segment spans residues 167–731; the sequence is DWVIPPINVP…VAAAGLGTGA (565 aa). N-linked (GlcNAc...) asparagine glycans are attached at residues Asn280, Asn409, Asn554, Asn629, Asn658, and Asn699. A helical membrane pass occupies residues 732–753; that stretch reads IIAILICIIILLTMVLLFVVWM. Residues 754 to 913 lie on the Cytoplasmic side of the membrane; sequence KRREKERHTK…ADMYGGGEED (160 aa).

As to expression, embryonic brain and neuronal retina.

It is found in the cell membrane. Its function is as follows. Cadherins are calcium-dependent cell adhesion proteins. They preferentially interact with themselves in a homophilic manner in connecting cells; cadherins may thus contribute to the sorting of heterogeneous cell types. May play an important role in retinal development. The sequence is that of Cadherin-4 (CDH4) from Gallus gallus (Chicken).